Consider the following 703-residue polypeptide: Capsid protein VP1 (703 aa).

Belongs to the caliciviridae capsid protein family. Homodimer. Homomultimer. Interacts with the minor capsid protein VP2. May bind to VP3 and Vpg proteins. Post-translationally, cleaved by the viral protease to produce mature capsid protein.

It localises to the virion. The protein resides in the host cytoplasm. In terms of biological role, capsid protein self assembles to form an icosahedral capsid with a T=3 symmetry, about 38 nm in diameter, and consisting of 180 capsid proteins. A smaller form of capsid with a diameter of 23 nm might be capsid proteins assembled as icosahedron with T=1 symmetry. The capsid encapsulates the genomic RNA and is decorated with VP2 proteins. This San Miguel sea lion virus serotype 4 (SMSV-4) protein is Capsid protein VP1.